Reading from the N-terminus, the 296-residue chain is Elongation factor Ts (296 aa).

The segment at 82–85 is involved in Mg(2+) ion dislocation from EF-Tu; the sequence is TDFV.

This sequence belongs to the EF-Ts family.

Its subcellular location is the cytoplasm. Functionally, associates with the EF-Tu.GDP complex and induces the exchange of GDP to GTP. It remains bound to the aminoacyl-tRNA.EF-Tu.GTP complex up to the GTP hydrolysis stage on the ribosome. This chain is Elongation factor Ts, found in Coxiella burnetii (strain CbuG_Q212) (Coxiella burnetii (strain Q212)).